Here is a 378-residue protein sequence, read N- to C-terminus: Anhydro-N-acetylmuramic acid kinase 2 (378 aa).

An ATP-binding site is contributed by 14-22 (GTVLDGNID).

It belongs to the anhydro-N-acetylmuramic acid kinase family.

The catalysed reaction is 1,6-anhydro-N-acetyl-beta-muramate + ATP + H2O = N-acetyl-D-muramate 6-phosphate + ADP + H(+). The protein operates within amino-sugar metabolism; 1,6-anhydro-N-acetylmuramate degradation. Its pathway is cell wall biogenesis; peptidoglycan recycling. Catalyzes the specific phosphorylation of 1,6-anhydro-N-acetylmuramic acid (anhMurNAc) with the simultaneous cleavage of the 1,6-anhydro ring, generating MurNAc-6-P. Is required for the utilization of anhMurNAc either imported from the medium or derived from its own cell wall murein, and thus plays a role in cell wall recycling. This is Anhydro-N-acetylmuramic acid kinase 2 from Jannaschia sp. (strain CCS1).